The following is a 253-amino-acid chain: HTH-type transcriptional regulator YdeO (253 aa).

Positions 137 to 233 (GKVRNIVNMK…GNSPKRVSKE (97 aa)) constitute an HTH araC/xylS-type domain. 2 consecutive DNA-binding regions (H-T-H motif) follow at residues 154–175 (KDIC…KQEQ) and 200–223 (VNKI…RKHF).

Its function is as follows. Induces the expression of gadE and mdtEF. Could also regulate the expression of other genes involved in acid resistance. This chain is HTH-type transcriptional regulator YdeO (ydeO), found in Escherichia coli (strain K12).